A 50-amino-acid polypeptide reads, in one-letter code: U2-ctenitoxin-Pk1a (50 aa).

Disulfide bonds link cysteine 1/cysteine 15, cysteine 8/cysteine 21, cysteine 12/cysteine 47, cysteine 14/cysteine 31, and cysteine 23/cysteine 29.

As to expression, expressed by the venom gland.

Its subcellular location is the secreted. Insecticidal neurotoxin that reversibly inhibits the N-methyl-D-aspartate (NMDA)-subtype of ionotropic glutamate receptor (GRIN) and inhibits inactivation of insect sodium channels (Nav). In vivo, is highly toxic to insects. In Phoneutria keyserlingi (Brazilian wandering spider), this protein is U2-ctenitoxin-Pk1a.